The following is a 166-amino-acid chain: UPF0304 protein VP0990 (166 aa).

This sequence belongs to the UPF0304 family.

The polypeptide is UPF0304 protein VP0990 (Vibrio parahaemolyticus serotype O3:K6 (strain RIMD 2210633)).